Here is a 115-residue protein sequence, read N- to C-terminus: Hydrogenase maturation factor HypA (115 aa).

A Ni(2+)-binding site is contributed by H2. Zn(2+)-binding residues include C73, C76, C89, and C92.

It belongs to the HypA/HybF family.

Its function is as follows. Involved in the maturation of [NiFe] hydrogenases. Required for nickel insertion into the metal center of the hydrogenase. In Parabacteroides distasonis (strain ATCC 8503 / DSM 20701 / CIP 104284 / JCM 5825 / NCTC 11152), this protein is Hydrogenase maturation factor HypA.